The following is a 128-amino-acid chain: Large ribosomal subunit protein bL17 (128 aa).

The protein belongs to the bacterial ribosomal protein bL17 family. In terms of assembly, part of the 50S ribosomal subunit. Contacts protein L32.

The polypeptide is Large ribosomal subunit protein bL17 (Streptococcus thermophilus (strain ATCC BAA-250 / LMG 18311)).